Consider the following 305-residue polypeptide: C alpha-dehydrogenase (305 aa).

10 to 34 (FITGGASGAGFGQAKVFGQAGAKIV) provides a ligand contact to NAD(+). Residue Ser-144 coordinates substrate. Tyr-157 serves as the catalytic Proton acceptor.

It belongs to the short-chain dehydrogenases/reductases (SDR) family.

It functions in the pathway secondary metabolite metabolism; lignin degradation. In terms of biological role, catalyzes the C alpha dehydrogenation of arylglycerol-beta-aryl ether (C alpha alcohol type) (compound IV). The sequence is that of C alpha-dehydrogenase (ligD) from Sphingobium sp. (strain NBRC 103272 / SYK-6).